Reading from the N-terminus, the 577-residue chain is Aspartate--tRNA ligase (577 aa).

L-aspartate is bound at residue glutamate 171. The tract at residues 195–198 (QLFK) is aspartate. Arginine 217 lines the L-aspartate pocket. Residues 217-219 (RDE) and glutamine 226 each bind ATP. An L-aspartate-binding site is contributed by histidine 437. Glutamate 472 contacts ATP. Arginine 479 contributes to the L-aspartate binding site. 524-527 (GFDR) serves as a coordination point for ATP.

This sequence belongs to the class-II aminoacyl-tRNA synthetase family. Type 1 subfamily. In terms of assembly, homodimer.

Its subcellular location is the cytoplasm. The enzyme catalyses tRNA(Asp) + L-aspartate + ATP = L-aspartyl-tRNA(Asp) + AMP + diphosphate. Catalyzes the attachment of L-aspartate to tRNA(Asp) in a two-step reaction: L-aspartate is first activated by ATP to form Asp-AMP and then transferred to the acceptor end of tRNA(Asp). In Deinococcus deserti (strain DSM 17065 / CIP 109153 / LMG 22923 / VCD115), this protein is Aspartate--tRNA ligase.